The sequence spans 113 residues: U11-theraphotoxin-Hhn1a (113 aa).

The first 21 residues, 1 to 21, serve as a signal peptide directing secretion; it reads MNTVRVAFLLVFVLAVSLGQA. A propeptide spanning residues 22–74 is cleaved from the precursor; it reads DKDENRMEMQEKTEQGKSYLDFAENLLLQKLEELEAKLLEEDSEESRNSRQKR. Residues 61–83 form a disordered region; sequence EEDSEESRNSRQKRCIGEGVPCD. Disulfide bonds link C75–C90, C82–C95, and C89–C110.

The protein belongs to the neurotoxin 14 (magi-1) family. 01 (HNTX-16) subfamily. In terms of tissue distribution, expressed by the venom gland.

It localises to the secreted. Its function is as follows. Probable ion channel inhibitor. The polypeptide is U11-theraphotoxin-Hhn1a (Cyriopagopus hainanus (Chinese bird spider)).